Reading from the N-terminus, the 267-residue chain is Pyrroline-5-carboxylate reductase (267 aa).

Belongs to the pyrroline-5-carboxylate reductase family.

It is found in the cytoplasm. The enzyme catalyses L-proline + NADP(+) = (S)-1-pyrroline-5-carboxylate + NADPH + 2 H(+). The catalysed reaction is L-proline + NAD(+) = (S)-1-pyrroline-5-carboxylate + NADH + 2 H(+). It participates in amino-acid biosynthesis; L-proline biosynthesis; L-proline from L-glutamate 5-semialdehyde: step 1/1. Its function is as follows. Catalyzes the reduction of 1-pyrroline-5-carboxylate (PCA) to L-proline. This Synechocystis sp. (strain ATCC 27184 / PCC 6803 / Kazusa) protein is Pyrroline-5-carboxylate reductase.